The sequence spans 204 residues: NAD(P)H dehydrogenase (quinone) (204 aa).

Positions 3–194 (VLIVFYSMYG…AGARYQGRHV (192 aa)) constitute a Flavodoxin-like domain. FMN-binding positions include 9 to 14 (SMYGHI) and 82 to 84 (TRF). Y11 contributes to the NAD(+) binding site. Position 102 (W102) interacts with substrate. Residue H138 participates in FMN binding.

This sequence belongs to the WrbA family. The cofactor is FMN.

It catalyses the reaction a quinone + NADH + H(+) = a quinol + NAD(+). It carries out the reaction a quinone + NADPH + H(+) = a quinol + NADP(+). The polypeptide is NAD(P)H dehydrogenase (quinone) (Syntrophobacter fumaroxidans (strain DSM 10017 / MPOB)).